The chain runs to 78 residues: Sec-independent protein translocase protein TatA (78 aa).

The helical transmembrane segment at 1–21 (MGSLSIWHWLIVLLIVALVFG) threads the bilayer. Composition is skewed to basic and acidic residues over residues 39 to 57 (FKEG…RDQL) and 65 to 78 (VDAK…GDSR). The tract at residues 39 to 78 (FKEGMKDGETPEGQQRDQLSRTNTVDVDAKEKAPHSGDSR) is disordered.

This sequence belongs to the TatA/E family. As to quaternary structure, the Tat system comprises two distinct complexes: a TatABC complex, containing multiple copies of TatA, TatB and TatC subunits, and a separate TatA complex, containing only TatA subunits. Substrates initially bind to the TatABC complex, which probably triggers association of the separate TatA complex to form the active translocon.

It is found in the cell inner membrane. Its function is as follows. Part of the twin-arginine translocation (Tat) system that transports large folded proteins containing a characteristic twin-arginine motif in their signal peptide across membranes. TatA could form the protein-conducting channel of the Tat system. This is Sec-independent protein translocase protein TatA from Paraburkholderia phymatum (strain DSM 17167 / CIP 108236 / LMG 21445 / STM815) (Burkholderia phymatum).